The chain runs to 74 residues: UPF0435 protein BAA_0470 (74 aa).

The protein belongs to the UPF0435 family.

The sequence is that of UPF0435 protein BAA_0470 from Bacillus anthracis (strain A0248).